The primary structure comprises 409 residues: Adenosine deaminase (409 aa).

Residues histidine 65, histidine 67, histidine 207, and aspartate 314 each coordinate Zn(2+).

The protein belongs to the metallo-dependent hydrolases superfamily. Zn(2+) is required as a cofactor.

The enzyme catalyses adenosine + H2O + H(+) = inosine + NH4(+). Functionally, catalyzes the deamination of adenosine into inosine. Is also able to deaminate adenine, but with considerably less efficiency. Is not active toward 6-chloroadenine. This chain is Adenosine deaminase, found in Helicobacter pylori (strain ATCC 700392 / 26695) (Campylobacter pylori).